The sequence spans 456 residues: MTTRLTRWLTALDNFEAKMALLPAVRRYGRLTRATGLVLEATGLQLPLGATCIIERQDGPETKEVESEVVGFNGQRLFLMPLEEVEGILPGARVYARNGHGDGLQSGKQLPLGPALLGRVLDGGGKPLDGLPAPDTLETGALITPPFNPLQRTPIEHVLDTGVRAINALLTVGRGQRMGLFAGSGVGKSVLLGMMARYTRADVIVVGLIGERGREVKDFIENILGPDGRARSVVIAAPADVSPLLRMQGAAYATRIAEDFRDRGQHVLLIMDSLTRYAMAQREIALAIGEPPATKGYPPSVFAKLPALVERAGNGIHGGGSITAFYTVLTEGDDQQDPIADSARAILDGHIVLSRRLAEAGHYPAIDIEASISRAMTALITEQHYARVRLFKQLLSSFQRNRDLVSVGAYAKGSDPMLDKAITLWPQLEAFLQQGIFERADWEDSLQALDLIFPTV.

182–189 (AGSGVGKS) is a binding site for ATP.

Belongs to the ATPase alpha/beta chains family.

It localises to the cytoplasm. It carries out the reaction ATP + H2O + 4 H(+)(in) = ADP + phosphate + 5 H(+)(out). Its function is as follows. Probable catalytic subunit of a protein translocase for flagellum-specific export, or a proton translocase involved in local circuits at the flagellum. May be involved in a specialized protein export pathway that proceeds without signal peptide cleavage. The protein is Flagellum-specific ATP synthase (fliI) of Salmonella typhimurium (strain LT2 / SGSC1412 / ATCC 700720).